Reading from the N-terminus, the 340-residue chain is L-galactonate-5-dehydrogenase (340 aa).

7 residues coordinate Zn(2+): cysteine 40, cysteine 65, cysteine 92, cysteine 95, cysteine 98, cysteine 106, and glutamate 146.

The protein belongs to the zinc-containing alcohol dehydrogenase family. The cofactor is Zn(2+).

It carries out the reaction L-galactonate + NAD(+) = keto-D-tagaturonate + NADH + H(+). Inhibited by EDTA. In terms of biological role, catalyzes the oxidation of L-galactonate to D-tagaturonate. Required for growth on L-galactonate as the sole carbon source. In vitro, can also use L-gulonate. The sequence is that of L-galactonate-5-dehydrogenase (lgoD) from Escherichia coli (strain K12).